We begin with the raw amino-acid sequence, 217 residues long: Enoyl-CoA-hydratase (217 aa).

The protein belongs to the enoyl-CoA hydratase/isomerase family.

The catalysed reaction is a (3S)-3-hydroxyacyl-CoA = a (2E)-enoyl-CoA + H2O. It carries out the reaction a 4-saturated-(3S)-3-hydroxyacyl-CoA = a (3E)-enoyl-CoA + H2O. Its pathway is antibiotic biosynthesis; vancomycin biosynthesis. In terms of biological role, involved in the biosynthesis of the nonproteinogenic amino acid monomer (S)-3,5-dihydroxyphenylglycine (Dpg) responsible of the production of vancomycin and teicoplanin antibiotics. Catalyzes the syn-addition of a water molecule across the double bond of a trans-2-enoyl-CoA thioester, resulting in the formation of a beta-hydroxyacyl-CoA thioester. Physiologically, DpgB could act as a dehydratase, facilitating the aromatization of the DPA-S-DgpA or DPA-S-CoA intermediate. The protein is Enoyl-CoA-hydratase (dpgB) of Amycolatopsis orientalis (Nocardia orientalis).